A 322-amino-acid polypeptide reads, in one-letter code: Aldo-keto reductase family 1 member C13 (322 aa).

NAD(+) is bound by residues 20–24 and Asp-50; that span reads GFGTY. Tyr-55 functions as the Proton donor in the catalytic mechanism. Residue His-117 coordinates substrate. NAD(+) is bound by residues 166 to 167, Gln-190, 216 to 224, and 270 to 280; these read SN, FGALGTQRY, and QSFYESEMKEN.

It belongs to the aldo/keto reductase family. As to quaternary structure, monomer. Post-translationally, the N-terminus is blocked.

The catalysed reaction is morphine + NAD(+) = morphinone + NADH + H(+). It carries out the reaction morphine + NADP(+) = morphinone + NADPH + H(+). Strongly inhibited by sulfhydryl reagents and ketamine, but not by pyrazole, barbital and indomethacine. Its function is as follows. Catalyzes the dehydrogenation of morphine to morphinone. The enzyme also exhibits significant activity for a variety of cyclic and alicyclic alcohols. In addition to xenobiotics, the enzyme catalyzes the dehydrogenation of 17-beta-hydroxysteroids with much higher affinities than morphine. Uses both NAD and NADP, but the activity is much greater with NAD than with NADP. The polypeptide is Aldo-keto reductase family 1 member C13 (AKR1C13) (Mesocricetus auratus (Golden hamster)).